Reading from the N-terminus, the 399-residue chain is Probable sugar efflux transporter (399 aa).

Helical transmembrane passes span 15 to 35 (VVTL…PVGL), 50 to 70 (VGMM…PFML), 81 to 101 (LIGL…AWSF), 103 to 123 (VLVI…SITS), 136 to 156 (AQAL…GIPI), 168 to 188 (MTFL…VKLL), 209 to 229 (PALV…YTAY), 246 to 266 (FATV…ILFG), 273 to 293 (ASGL…LLLP), 301 to 321 (LMLL…GMQV), 333 to 353 (VAMS…ALVG), and 364 to 384 (SIGY…LMIF).

It belongs to the major facilitator superfamily. SotB (TC 2.A.1.2) family.

The protein localises to the cell inner membrane. Its function is as follows. Involved in the efflux of sugars. The physiological role may be the reduction of the intracellular concentration of toxic sugars or sugar metabolites. This chain is Probable sugar efflux transporter, found in Klebsiella pneumoniae (strain 342).